The chain runs to 255 residues: Coenzyme F420:L-glutamate ligase (255 aa).

GTP-binding positions include 11–14 (IPLI), 40–41 (ST), and K45. D109 serves as a coordination point for a divalent metal cation. N112 lines the GTP pocket. Positions 150, 151, and 208 each coordinate a divalent metal cation. Residue 206–213 (MGEGAGGT) participates in GTP binding.

The protein belongs to the CofE family. Homodimer. It depends on Mg(2+) as a cofactor. Mn(2+) serves as cofactor. K(+) is required as a cofactor.

It carries out the reaction oxidized coenzyme F420-0 + GTP + L-glutamate = oxidized coenzyme F420-1 + GDP + phosphate + H(+). The catalysed reaction is oxidized coenzyme F420-1 + GTP + L-glutamate = oxidized coenzyme F420-2 + GDP + phosphate + H(+). The protein operates within cofactor biosynthesis; coenzyme F420 biosynthesis. Its function is as follows. Catalyzes the GTP-dependent successive addition of two or more gamma-linked L-glutamates to the L-lactyl phosphodiester of 7,8-didemethyl-8-hydroxy-5-deazariboflavin (F420-0) to form coenzyme F420-0-glutamyl-glutamate (F420-2) or polyglutamated F420 derivatives. This chain is Coenzyme F420:L-glutamate ligase, found in Methanosarcina barkeri (strain Fusaro / DSM 804).